The following is an 86-amino-acid chain: uncharacterized protein (86 aa).

2 consecutive transmembrane segments (helical) span residues 20–38 and 47–63; these read IQFW…SVYL and FSTF…TKGV. The tract at residues 67-86 is disordered; that stretch reads LSQRREQGKEQGREQGREQE. A compositionally biased stretch (basic and acidic residues) spans 69–86; it reads QRREQGKEQGREQGREQE.

It localises to the cell membrane. This is an uncharacterized protein from Haemophilus influenzae (strain ATCC 51907 / DSM 11121 / KW20 / Rd).